The following is a 204-amino-acid chain: Phosphoheptose isomerase (204 aa).

The 162-residue stretch at 38-199 (MAVALARGGK…LFEAVMELGP (162 aa)) folds into the SIS domain. Residue 53-55 (NGG) coordinates substrate. Positions 62 and 66 each coordinate Zn(2+). Substrate-binding positions include E66, 95–96 (ND), 121–123 (STS), S126, and Q172. The Zn(2+) site is built by Q172 and H180.

The protein belongs to the SIS family. GmhA subfamily. Homotetramer. It depends on Zn(2+) as a cofactor.

The protein resides in the cytoplasm. The catalysed reaction is 2 D-sedoheptulose 7-phosphate = D-glycero-alpha-D-manno-heptose 7-phosphate + D-glycero-beta-D-manno-heptose 7-phosphate. Its pathway is carbohydrate biosynthesis; D-glycero-D-manno-heptose 7-phosphate biosynthesis; D-glycero-alpha-D-manno-heptose 7-phosphate and D-glycero-beta-D-manno-heptose 7-phosphate from sedoheptulose 7-phosphate: step 1/1. Functionally, catalyzes the isomerization of sedoheptulose 7-phosphate in D-glycero-D-manno-heptose 7-phosphate. The sequence is that of Phosphoheptose isomerase from Solidesulfovibrio magneticus (strain ATCC 700980 / DSM 13731 / RS-1) (Desulfovibrio magneticus).